A 124-amino-acid chain; its full sequence is MGKTKKRKQSITLIEMMVVITLIGIISGALAFNMRGSLQKGKVFQTEQNCARVYDVLMMEYASGNLSLKEVIANKETLLDNSAWCKEGKKLLKDAWGEDLIVKMNDRGDDIVVLSKKLKSEQRG.

Residues 1-31 (MGKTKKRKQSITLIEMMVVITLIGIISGALA) form the signal peptide.

The protein resides in the cell outer membrane. This Chlamydia muridarum (strain MoPn / Nigg) protein is Putative outer membrane protein TC_0858.